A 144-amino-acid chain; its full sequence is UPF0306 protein Spro_0510 (144 aa).

This sequence belongs to the UPF0306 family.

This is UPF0306 protein Spro_0510 from Serratia proteamaculans (strain 568).